A 185-amino-acid chain; its full sequence is Peptidyl-tRNA hydrolase (185 aa).

Residue Tyr-14 coordinates tRNA. His-19 serves as the catalytic Proton acceptor. The tRNA site is built by Phe-64, Asn-66, and Asn-112.

This sequence belongs to the PTH family. Monomer.

The protein resides in the cytoplasm. It carries out the reaction an N-acyl-L-alpha-aminoacyl-tRNA + H2O = an N-acyl-L-amino acid + a tRNA + H(+). Functionally, hydrolyzes ribosome-free peptidyl-tRNAs (with 1 or more amino acids incorporated), which drop off the ribosome during protein synthesis, or as a result of ribosome stalling. Catalyzes the release of premature peptidyl moieties from peptidyl-tRNA molecules trapped in stalled 50S ribosomal subunits, and thus maintains levels of free tRNAs and 50S ribosomes. This chain is Peptidyl-tRNA hydrolase, found in Levilactobacillus brevis (strain ATCC 367 / BCRC 12310 / CIP 105137 / JCM 1170 / LMG 11437 / NCIMB 947 / NCTC 947) (Lactobacillus brevis).